A 400-amino-acid chain; its full sequence is Probable succinyl-diaminopimelate desuccinylase (400 aa).

His-72 contributes to the Zn(2+) binding site. Asp-74 is an active-site residue. Residue Asp-105 participates in Zn(2+) binding. Residue Glu-139 is the Proton acceptor of the active site. Residues Glu-140, Glu-165, and His-378 each contribute to the Zn(2+) site.

Belongs to the peptidase M20A family. Zn(2+) is required as a cofactor. Requires Co(2+) as cofactor.

The enzyme catalyses N-succinyl-(2S,6S)-2,6-diaminopimelate + H2O = (2S,6S)-2,6-diaminopimelate + succinate. It participates in amino-acid biosynthesis; L-lysine biosynthesis via DAP pathway; LL-2,6-diaminopimelate from (S)-tetrahydrodipicolinate (succinylase route): step 3/3. The polypeptide is Probable succinyl-diaminopimelate desuccinylase (dapE) (Staphylococcus aureus (strain Mu50 / ATCC 700699)).